The primary structure comprises 371 residues: Glutamate 5-kinase (371 aa).

K14 contributes to the ATP binding site. 3 residues coordinate substrate: S54, D141, and N153. 173–174 (TD) lines the ATP pocket. Residues 280–357 (AGDLILDDGA…TQIEKLLGYI (78 aa)) enclose the PUA domain.

The protein belongs to the glutamate 5-kinase family.

The protein resides in the cytoplasm. The enzyme catalyses L-glutamate + ATP = L-glutamyl 5-phosphate + ADP. It participates in amino-acid biosynthesis; L-proline biosynthesis; L-glutamate 5-semialdehyde from L-glutamate: step 1/2. Functionally, catalyzes the transfer of a phosphate group to glutamate to form L-glutamate 5-phosphate. The chain is Glutamate 5-kinase from Aromatoleum aromaticum (strain DSM 19018 / LMG 30748 / EbN1) (Azoarcus sp. (strain EbN1)).